The primary structure comprises 378 residues: Ribosomal RNA large subunit methyltransferase G (378 aa).

Belongs to the methyltransferase superfamily. RlmG family.

The protein localises to the cytoplasm. It catalyses the reaction guanosine(1835) in 23S rRNA + S-adenosyl-L-methionine = N(2)-methylguanosine(1835) in 23S rRNA + S-adenosyl-L-homocysteine + H(+). Functionally, specifically methylates the guanine in position 1835 (m2G1835) of 23S rRNA. This is Ribosomal RNA large subunit methyltransferase G from Salmonella arizonae (strain ATCC BAA-731 / CDC346-86 / RSK2980).